We begin with the raw amino-acid sequence, 863 residues long: Glycogen phosphorylase (863 aa).

An N6-(pyridoxal phosphate)lysine modification is found at Lys618.

The protein belongs to the glycogen phosphorylase family. Requires pyridoxal 5'-phosphate as cofactor.

It catalyses the reaction [(1-&gt;4)-alpha-D-glucosyl](n) + phosphate = [(1-&gt;4)-alpha-D-glucosyl](n-1) + alpha-D-glucose 1-phosphate. Functionally, phosphorylase is an important allosteric enzyme in carbohydrate metabolism. Enzymes from different sources differ in their regulatory mechanisms and in their natural substrates. However, all known phosphorylases share catalytic and structural properties. The protein is Glycogen phosphorylase (glgP) of Mycobacterium tuberculosis (strain CDC 1551 / Oshkosh).